Consider the following 239-residue polypeptide: Probable transcriptional regulatory protein VC_A0006 (239 aa).

It belongs to the TACO1 family.

Its subcellular location is the cytoplasm. The sequence is that of Probable transcriptional regulatory protein VC_A0006 from Vibrio cholerae serotype O1 (strain ATCC 39315 / El Tor Inaba N16961).